Consider the following 505-residue polypeptide: Flagellin (505 aa).

Belongs to the bacterial flagellin family.

It localises to the secreted. The protein localises to the bacterial flagellum. In terms of biological role, flagellin is the subunit protein which polymerizes to form the filaments of bacterial flagella. This chain is Flagellin (fliC), found in Salmonella rostock.